Here is a 37-residue protein sequence, read N- to C-terminus: U1-theraphotoxin-Hs1b (37 aa).

Disulfide bonds link Cys4–Cys18, Cys8–Cys29, and Cys23–Cys34.

As to quaternary structure, form 1 and form 2 may dimerize. As to expression, expressed by the venom gland.

It is found in the secreted. Functionally, lethal neurotoxin that blocks neuromuscular transmission. Acts cooperatively to potentiate the activity of huwentoxin-I. In Cyriopagopus schmidti (Chinese bird spider), this protein is U1-theraphotoxin-Hs1b.